The following is a 318-amino-acid chain: Mitochondrial coenzyme A transporter SLC25A42 (318 aa).

Solcar repeat units lie at residues 31-117 (RQVL…YKRI), 129-214 (LPPW…LKSL), and 224-312 (PYPF…MQIL). The next 6 membrane-spanning stretches (helical) occupy residues 33–53 (VLSSLLSGALAGALAKTAVAP), 89–109 (LWRGNSATMVRVVPYAAIQFS), 135–155 (LFAGALAGTTAASLTYPLDLV), 186–206 (LYHGFMPTVLGVIPYAGLSFF), 230–250 (MIFGACAGLIGQSASYPLDVV), and 293–313 (VKGPIAVGISFTTFDLMQILL).

The protein belongs to the mitochondrial carrier (TC 2.A.29) family.

It is found in the mitochondrion inner membrane. It carries out the reaction ADP(out) + CoA(in) = ADP(in) + CoA(out). The enzyme catalyses 3'-dephospho-CoA(in) + ADP(out) = 3'-dephospho-CoA(out) + ADP(in). The catalysed reaction is adenosine 3',5'-bisphosphate(in) + ADP(out) = adenosine 3',5'-bisphosphate(out) + ADP(in). It catalyses the reaction AMP(in) + ADP(out) = AMP(out) + ADP(in). It carries out the reaction dADP(in) + ADP(out) = dADP(out) + ADP(in). The enzyme catalyses ADP(in) + ATP(out) = ADP(out) + ATP(in). In terms of biological role, mitochondrial carrier mediating the transport of coenzyme A (CoA) in mitochondria in exchange for intramitochondrial (deoxy)adenine nucleotides and adenosine 3',5'-diphosphate. In Homo sapiens (Human), this protein is Mitochondrial coenzyme A transporter SLC25A42 (SLC25A42).